Consider the following 505-residue polypeptide: ATP synthase subunit alpha, chloroplastic (505 aa).

An ATP-binding site is contributed by 170 to 177 (GDRQTGKT).

The protein belongs to the ATPase alpha/beta chains family. As to quaternary structure, F-type ATPases have 2 components, CF(1) - the catalytic core - and CF(0) - the membrane proton channel. CF(1) has five subunits: alpha(3), beta(3), gamma(1), delta(1), epsilon(1). CF(0) has four main subunits: a, b, b' and c.

The protein resides in the plastid. The protein localises to the chloroplast thylakoid membrane. The enzyme catalyses ATP + H2O + 4 H(+)(in) = ADP + phosphate + 5 H(+)(out). Functionally, produces ATP from ADP in the presence of a proton gradient across the membrane. The alpha chain is a regulatory subunit. The polypeptide is ATP synthase subunit alpha, chloroplastic (Carica papaya (Papaya)).